The chain runs to 91 residues: DNA-binding protein HU-beta 2 (91 aa).

This sequence belongs to the bacterial histone-like protein family.

Histone-like DNA-binding protein which is capable of wrapping DNA to stabilize it, and thus to prevent its denaturation under extreme environmental conditions. The polypeptide is DNA-binding protein HU-beta 2 (hupB2) (Neisseria meningitidis serogroup A / serotype 4A (strain DSM 15465 / Z2491)).